The sequence spans 196 residues: HTH-type transcriptional regulator EcpR (196 aa).

Residues 138–196 (KDIKKDKITDREMEIIRMTAQGMQPKSIARIENCSVKTVYTHRRNAEAKLYSKIYKLVQ) form the HTH luxR-type domain. A DNA-binding region (H-T-H motif) is located at residues 162–181 (PKSIARIENCSVKTVYTHRR).

It belongs to the EcpR/MatA family.

The protein resides in the cytoplasm. In terms of biological role, part of the ecpRABCDE operon, which encodes the E.coli common pilus (ECP). ECP is found in both commensal and pathogenic strains and plays a dual role in early-stage biofilm development and host cell recognition. Positively regulates the expression of the ecp operon. In Escherichia coli (strain SE11), this protein is HTH-type transcriptional regulator EcpR (ecpR).